The following is a 391-amino-acid chain: Ectodysplasin-A (391 aa).

Residues 1 to 21 are compositionally biased toward basic and acidic residues; the sequence is MGYPEVERREPLPAAAPRERG. The interval 1–28 is disordered; that stretch reads MGYPEVERREPLPAAAPRERGSQGCGCR. Residues 1–41 lie on the Cytoplasmic side of the membrane; the sequence is MGYPEVERREPLPAAAPRERGSQGCGCRGAPARAGEGNSCR. A helical; Signal-anchor for type II membrane protein membrane pass occupies residues 42–62; it reads LFLGFFGLSLALHLLTLCCYL. At 63–391 the chain is on the extracellular side; it reads ELRSELRRER…AIRLGEAPAS (329 aa). Disordered stretches follow at residues 73-130 and 145-245; these read GAES…SQDG and SYSE…GTRE. Residues 76 to 96 are compositionally biased toward low complexity; sequence SRFSGPGTPGTSGTLSSPGGL. Residues 180-229 enclose the Collagen-like domain; sequence GPPGPNGPPGPPGPPGPQGPPGIPGIPGIPGTTVMGPPGPPGPPGPQGPP. Composition is skewed to pro residues over residues 181 to 203 and 216 to 228; these read PPGP…PGIP and PPGP…PQGP. The region spanning 249–385 is the THD domain; the sequence is AVVHLQGQGS…HTTFFGAIRL (137 aa). An N-linked (GlcNAc...) asparagine glycan is attached at asparagine 313. Cysteine 332 and cysteine 346 are joined by a disulfide. Residue asparagine 372 is glycosylated (N-linked (GlcNAc...) asparagine).

This sequence belongs to the tumor necrosis factor family. As to quaternary structure, homotrimer. The homotrimers may then dimerize and form higher-order oligomers. N-glycosylated. In terms of processing, processing by furin produces a secreted form.

Its subcellular location is the cell membrane. It is found in the secreted. Its function is as follows. Cytokine which is involved in epithelial-mesenchymal signaling during morphogenesis of ectodermal organs. Functions as a ligand activating the DEATH-domain containing receptors EDAR and EDA2R. Isoform A1 binds only to the receptor EDAR, while isoform A2 binds exclusively to the receptor EDA2R. May also play a role in cell adhesion. Isoform A1 binds only to the receptor EDAR, while isoform A2 binds exclusively to the receptor EDA2R. In terms of biological role, isoform A2 binds exclusively to the receptor EDA2R. The protein is Ectodysplasin-A (EDA) of Bos taurus (Bovine).